We begin with the raw amino-acid sequence, 655 residues long: MSSNSYEVSIPMSKKLNGIPETTSKDLQTLTEGAVLSFHNICYRVKVKTGFLLCRKTIEKEILANINGVMKPGLNAILGPTGGGKSSLLDILAARKDPHGLSGDVLINGAPRPANFKCNSGYVVQDDVVMGTLTVRENLQFSAALRLPTTMTSYEKNERINKVIQELGLDKVADSKVGTQFIRGVSGGERKRTSIAMELITDPSILFLDEPTTGLDSSTANAVLLLLKRMSKQGRTIIFSIHQPRYSIFKLFDSLTLLASGRLMFHGPAQEALGYFGAIGFRCEPYNNPADFFLDIINGDSSAVVLNREDIGDEANETEEPSKKDTPLIEKLAEFYVNSSFFKETKVELDKFSGDQRRKKLPSYKEVTYATSFCHQLKWISRRSFKNLLGNPQASIAQLIVTVFLGLVIGAIFYDLKNDPAGIQNRAGVLFFLTTNQCFSSVSAVELLVVEKKLFIHEYISGYYRVSSYFFGKLLSDLLPMRMLPSIIFTCITYFLLGLKPKVEAFFIMMLTLMMVAYSASSMALAIAAGQSVVSIATLLMTISFVFMMIFSGLLVNLKTVVPWLSWLQYLSIPRYGYAALQHNEFLGQNFCPGLNVTTNNTCSYAICTGEEFLTNQGIDISPWGLWKNHVALACMIVIFLTIAYLKLLFLKKFS.

Over 1–395 (MSSNSYEVSI…KNLLGNPQAS (395 aa)) the chain is Cytoplasmic. The ABC transporter domain occupies 36–285 (LSFHNICYRV…FGAIGFRCEP (250 aa)). ATP contacts are provided by residues 79–86 (GPTGGGKS), 183–189 (RGVSGGE), glutamate 210, and histidine 242. The 263-residue stretch at 389-651 (LGNPQASIAQ…TIAYLKLLFL (263 aa)) folds into the ABC transmembrane type-2 domain. Residues 396–416 (IAQLIVTVFLGLVIGAIFYDL) traverse the membrane as a helical segment. At 417–428 (KNDPAGIQNRAG) the chain is on the extracellular side. A helical transmembrane segment spans residues 429–449 (VLFFLTTNQCFSSVSAVELLV). Topologically, residues 450-477 (VEKKLFIHEYISGYYRVSSYFFGKLLSD) are cytoplasmic. Residues 478–498 (LLPMRMLPSIIFTCITYFLLG) form a helical membrane-spanning segment. The Extracellular segment spans residues 499–506 (LKPKVEAF). A helical membrane pass occupies residues 507–527 (FIMMLTLMMVAYSASSMALAI). Topologically, residues 528 to 535 (AAGQSVVS) are cytoplasmic. Residues 536–556 (IATLLMTISFVFMMIFSGLLV) traverse the membrane as a helical segment. Residues 557 to 630 (NLKTVVPWLS…ISPWGLWKNH (74 aa)) lie on the Extracellular side of the membrane. A disulfide bond links cysteine 592 and cysteine 608. N-linked (GlcNAc...) asparagine glycosylation is found at asparagine 596 and asparagine 600. A helical membrane pass occupies residues 631–651 (VALACMIVIFLTIAYLKLLFL). The Cytoplasmic portion of the chain corresponds to 652–655 (KKFS).

Belongs to the ABC transporter superfamily. ABCG family. Eye pigment precursor importer (TC 3.A.1.204) subfamily. Homodimer; disulfide-linked. The minimal functional unit is a homodimer, but the major oligomeric form in plasma membrane is a homotetramer with possibility of higher order oligomerization up to homododecamers. Post-translationally, N-glycosylated. Glycosylation-deficient ABCG2 is normally expressed and functional. Phosphorylated. Phosphorylation may regulate the localization to the plasma membrane, the homooligomerization and therefore, the activity of the transporter.

It is found in the cell membrane. Its subcellular location is the apical cell membrane. It localises to the mitochondrion membrane. The catalysed reaction is ATP + H2O + xenobioticSide 1 = ADP + phosphate + xenobioticSide 2.. It catalyses the reaction urate(in) + ATP + H2O = urate(out) + ADP + phosphate + H(+). The enzyme catalyses indoxyl sulfate(in) + ATP + H2O = indoxyl sulfate(out) + ADP + phosphate + H(+). It carries out the reaction sphing-4-enine 1-phosphate(in) + ATP + H2O = sphing-4-enine 1-phosphate(out) + ADP + phosphate + H(+). The catalysed reaction is estrone 3-sulfate(in) + ATP + H2O = estrone 3-sulfate(out) + ADP + phosphate + H(+). It catalyses the reaction dehydroepiandrosterone 3-sulfate(in) + ATP + H2O = dehydroepiandrosterone 3-sulfate(out) + ADP + phosphate + H(+). The enzyme catalyses 4-methylumbelliferone sulfate(in) + ATP + H2O = 4-methylumbelliferone sulfate(out) + ADP + phosphate + H(+). It carries out the reaction 5,7-dimethyl-2-methylamino-4-(3-pyridylmethyl)-1,3-benzothiazol-6-yl beta-D-glucuronate(in) + ATP + H2O = 5,7-dimethyl-2-methylamino-4-(3-pyridylmethyl)-1,3-benzothiazol-6-yl beta-D-glucuronate(out) + ADP + phosphate + H(+). The catalysed reaction is 4-methylumbelliferone beta-D-glucuronate(in) + ATP + H2O = 4-methylumbelliferone beta-D-glucuronate(out) + ADP + phosphate + H(+). It catalyses the reaction 5,7-dimethyl-2-methylamino-4-(3-pyridylmethyl)-1,3-benzothiazol-6-yl sulfate(in) + ATP + H2O = 5,7-dimethyl-2-methylamino-4-(3-pyridylmethyl)-1,3-benzothiazol-6-yl sulfate(out) + ADP + phosphate + H(+). The enzyme catalyses 17beta-estradiol 17-O-(beta-D-glucuronate)(in) + ATP + H2O = 17beta-estradiol 17-O-(beta-D-glucuronate)(out) + ADP + phosphate + H(+). It carries out the reaction methotrexate(in) + ATP + H2O = methotrexate(out) + ADP + phosphate + H(+). The catalysed reaction is riboflavin(in) + ATP + H2O = riboflavin(out) + ADP + phosphate + H(+). It catalyses the reaction pheophorbide a(in) + ATP + H2O = pheophorbide a(out) + ADP + phosphate + H(+). The enzyme catalyses itaconate(in) + ATP + H2O = itaconate(out) + ADP + phosphate + H(+). In terms of biological role, broad substrate specificity ATP-dependent transporter of the ATP-binding cassette (ABC) family that actively extrudes a wide variety of physiological compounds, dietary toxins and xenobiotics from cells. Involved in porphyrin homeostasis, mediating the export of protoporphyrin IX (PPIX) from both mitochondria to cytosol and cytosol to extracellular space, it also functions in the cellular export of heme. Also mediates the efflux of sphingosine-1-P from cells. Acts as a urate exporter functioning in both renal and extrarenal urate excretion. In kidney, it also functions as a physiological exporter of the uremic toxin indoxyl sulfate. Also involved in the excretion of steroids like estrone 3-sulfate/E1S, 3beta-sulfooxy-androst-5-en-17-one/DHEAS, and other sulfate conjugates. Mediates the secretion of the riboflavin and biotin vitamins into milk. Extrudes pheophorbide a, a phototoxic porphyrin catabolite of chlorophyll, reducing its bioavailability. Plays an important role in the exclusion of xenobiotics from the brain. It confers to cells a resistance to multiple drugs and other xenobiotics including mitoxantrone, pheophorbide, camptothecin, methotrexate, azidothymidine, and the anthracyclines daunorubicin and doxorubicin, through the control of their efflux. In placenta, it limits the penetration of drugs from the maternal plasma into the fetus. May play a role in early stem cell self-renewal by blocking differentiation. In inflammatory macrophages, exports itaconate from the cytosol to the extracellular compartment and limits the activation of TFEB-dependent lysosome biogenesis involved in antibacterial innate immune response. The sequence is that of Broad substrate specificity ATP-binding cassette transporter ABCG2 (ABCG2) from Bos taurus (Bovine).